A 567-amino-acid polypeptide reads, in one-letter code: DNA ligase (567 aa).

Residue glutamate 260 coordinates ATP. Catalysis depends on lysine 262, which acts as the N6-AMP-lysine intermediate. ATP contacts are provided by arginine 267, arginine 282, glutamate 312, phenylalanine 352, arginine 427, and lysine 433.

Belongs to the ATP-dependent DNA ligase family. The cofactor is Mg(2+).

It catalyses the reaction ATP + (deoxyribonucleotide)n-3'-hydroxyl + 5'-phospho-(deoxyribonucleotide)m = (deoxyribonucleotide)n+m + AMP + diphosphate.. Its function is as follows. DNA ligase that seals nicks in double-stranded DNA during DNA replication, DNA recombination and DNA repair. The protein is DNA ligase of Methanococcoides burtonii (strain DSM 6242 / NBRC 107633 / OCM 468 / ACE-M).